Reading from the N-terminus, the 177-residue chain is Inner membrane protein p22 (177 aa).

Topologically, residues 1 to 7 (MFNIKMT) are intravirion. The helical transmembrane segment at 8-28 (ISTLLIALIILVIIILVVFLY) threads the bilayer. Topologically, residues 29–177 (YKKQQPPKKV…IALPRNHKHA (149 aa)) are virion surface.

It belongs to the asfivirus inner membrane protein p22 family.

It is found in the virion membrane. It localises to the host cell membrane. The protein is Inner membrane protein p22 of Ornithodoros (relapsing fever ticks).